Consider the following 282-residue polypeptide: Small-conductance mechanosensitive channel (282 aa).

Residues 1-23 (MWADIYHKLVEIYDIKAVKFLLD) lie on the Periplasmic side of the membrane. Residues 24 to 46 (VLKILIIAFIGIKFADFLIYRFY) form a helical membrane-spanning segment. Topologically, residues 47–66 (KLYSKSKIQLPQRKIDTLTS) are cytoplasmic. A helical transmembrane segment spans residues 67–87 (LTKNAVRYIIYFLAGASILKL). Topologically, residues 88–89 (FN) are periplasmic. Residues 90–110 (IDMTSLLAVAGIGSLAIGFGA) form a helical membrane-spanning segment. The Cytoplasmic segment spans residues 111 to 282 (QNLVKDMISG…TVILSEKKTN (172 aa)).

The protein belongs to the MscS (TC 1.A.23) family. In terms of assembly, homoheptamer.

Its subcellular location is the cell inner membrane. Its function is as follows. Mechanosensitive ion channel that participates in the regulation of osmotic pressure changes within the cell, opening in response to stretch forces in the membrane lipid bilayer, without the need for other proteins. Has high selectivity for anions, and may contribute to resistance to hypoosmotic shock. This is Small-conductance mechanosensitive channel from Caldanaerobacter subterraneus subsp. tengcongensis (strain DSM 15242 / JCM 11007 / NBRC 100824 / MB4) (Thermoanaerobacter tengcongensis).